The chain runs to 212 residues: Endothelin-1 (212 aa).

Residues 1–17 (MDYLLMIFSLLFVACQG) form the signal peptide. A propeptide spanning residues 18–50 (APETAVLGAELSAVGENGGEKPTPSPPWRLRRS) is cleaved from the precursor. Cystine bridges form between Cys53-Cys67 and Cys55-Cys63. Positions 74-212 (VNTPEHVVPY…RYVTHNRAHW (139 aa)) are excised as a propeptide. The segment at 109-123 (CQCASQKDKKCWNFC) is endothelin-like. 2 stretches are compositionally biased toward basic and acidic residues: residues 168–181 (RSSE…RSET) and 189–205 (SFHD…ERYV). A disordered region spans residues 168–212 (RSSEEHLRQTRSETMRNSVKSSFHDPKLKGKPSRERYVTHNRAHW).

It belongs to the endothelin/sarafotoxin family. Expressed in lung, placental stem villi vessels and in cultured placental vascular smooth muscle cells.

The protein localises to the secreted. Functionally, endothelins are endothelium-derived vasoconstrictor peptides. Probable ligand for G-protein coupled receptors EDNRA and EDNRB which activates PTK2B, BCAR1, BCAR3 and, GTPases RAP1 and RHOA cascade in glomerular mesangial cells. Also binds the DEAR/FBXW7-AS1 receptor. Promotes mesenteric arterial wall remodeling via activation of ROCK signaling and subsequent colocalization of NFATC3 with F-actin filaments. NFATC3 then translocates to the nucleus where it subsequently promotes the transcription of the smooth muscle hypertrophy and differentiation marker ACTA2. In Homo sapiens (Human), this protein is Endothelin-1 (EDN1).